The chain runs to 184 residues: Photosystem I assembly protein Ycf4 (184 aa).

2 helical membrane passes run 19-39 (ISNLCWAFTLFLGSLGFVLVG) and 57-77 (IIFFPQGIVMSFYGIAGLFIS).

It belongs to the Ycf4 family.

The protein resides in the plastid thylakoid membrane. In terms of biological role, seems to be required for the assembly of the photosystem I complex. This is Photosystem I assembly protein Ycf4 from Cuscuta reflexa (Southern Asian dodder).